Reading from the N-terminus, the 309-residue chain is Olfactory receptor 4B1 (309 aa).

At 1–23 the chain is on the extracellular side; it reads MASTSNVTELIFTGLFQDPAVQS. An N-linked (GlcNAc...) asparagine glycan is attached at Asn6. A helical transmembrane segment spans residues 24 to 47; sequence VCFVVFLPVYLATVVGNGLIVLTV. At 48-55 the chain is on the cytoplasmic side; it reads SISKSLDS. The chain crosses the membrane as a helical span at residues 56-77; sequence PMYFFLSCLSLVEISYSSTIAP. Over 78-98 the chain is Extracellular; it reads KFIIDLLAKIKTISLEGCLTQ. An intrachain disulfide couples Cys95 to Cys187. Residues 99–118 traverse the membrane as a helical segment; the sequence is IFFFHFFGVAEILLIVVMAY. Residues 119-137 lie on the Cytoplasmic side of the membrane; that stretch reads DCYVAICKPLHYMNIISRQ. Residues 138-156 form a helical membrane-spanning segment; it reads LCHLLVAGSWLGGFCHSII. At 157–193 the chain is on the extracellular side; it reads QILVIIQLPFCGPNVIDHYFCDLQPLFKLACTDTFME. Residues 194–217 traverse the membrane as a helical segment; the sequence is GVIVLANSGLFSVFSFLILVSSYI. Residues 218–233 are Cytoplasmic-facing; the sequence is VILVNLRNHSAEGRHK. Residues 234–256 form a helical membrane-spanning segment; the sequence is ALSTCASHITVVILFFGPAIFLY. Over 257–267 the chain is Extracellular; that stretch reads MRPSSTFTEDK. The chain crosses the membrane as a helical span at residues 268–287; it reads LVAVFYTVITPMLNPIIYTL. Over 288-309 the chain is Cytoplasmic; sequence RNAEVKIAIRRLWSKKENPGRE.

The protein belongs to the G-protein coupled receptor 1 family.

It is found in the cell membrane. Functionally, odorant receptor. The sequence is that of Olfactory receptor 4B1 (OR4B1) from Homo sapiens (Human).